The following is a 207-amino-acid chain: Thiamine-phosphate synthase (207 aa).

4-amino-2-methyl-5-(diphosphooxymethyl)pyrimidine-binding positions include 36-40 and Asn-68; that span reads QLRMK. Positions 69 and 88 each coordinate Mg(2+). Residue Ser-106 coordinates 4-amino-2-methyl-5-(diphosphooxymethyl)pyrimidine. Position 132-134 (132-134) interacts with 2-[(2R,5Z)-2-carboxy-4-methylthiazol-5(2H)-ylidene]ethyl phosphate; it reads TNT. Lys-135 contributes to the 4-amino-2-methyl-5-(diphosphooxymethyl)pyrimidine binding site. Residues Gly-162 and 182–183 each bind 2-[(2R,5Z)-2-carboxy-4-methylthiazol-5(2H)-ylidene]ethyl phosphate; that span reads VS.

Belongs to the thiamine-phosphate synthase family. Mg(2+) serves as cofactor.

It carries out the reaction 2-[(2R,5Z)-2-carboxy-4-methylthiazol-5(2H)-ylidene]ethyl phosphate + 4-amino-2-methyl-5-(diphosphooxymethyl)pyrimidine + 2 H(+) = thiamine phosphate + CO2 + diphosphate. The catalysed reaction is 2-(2-carboxy-4-methylthiazol-5-yl)ethyl phosphate + 4-amino-2-methyl-5-(diphosphooxymethyl)pyrimidine + 2 H(+) = thiamine phosphate + CO2 + diphosphate. It catalyses the reaction 4-methyl-5-(2-phosphooxyethyl)-thiazole + 4-amino-2-methyl-5-(diphosphooxymethyl)pyrimidine + H(+) = thiamine phosphate + diphosphate. It participates in cofactor biosynthesis; thiamine diphosphate biosynthesis; thiamine phosphate from 4-amino-2-methyl-5-diphosphomethylpyrimidine and 4-methyl-5-(2-phosphoethyl)-thiazole: step 1/1. Condenses 4-methyl-5-(beta-hydroxyethyl)thiazole monophosphate (THZ-P) and 2-methyl-4-amino-5-hydroxymethyl pyrimidine pyrophosphate (HMP-PP) to form thiamine monophosphate (TMP). This is Thiamine-phosphate synthase from Methanococcus maripaludis (strain DSM 14266 / JCM 13030 / NBRC 101832 / S2 / LL).